The primary structure comprises 97 residues: Co-chaperonin GroES (97 aa).

Belongs to the GroES chaperonin family. In terms of assembly, heptamer of 7 subunits arranged in a ring. Interacts with the chaperonin GroEL.

The protein resides in the cytoplasm. Its function is as follows. Together with the chaperonin GroEL, plays an essential role in assisting protein folding. The GroEL-GroES system forms a nano-cage that allows encapsulation of the non-native substrate proteins and provides a physical environment optimized to promote and accelerate protein folding. GroES binds to the apical surface of the GroEL ring, thereby capping the opening of the GroEL channel. In Buchnera aphidicola subsp. Cinara cedri (strain Cc), this protein is Co-chaperonin GroES.